Consider the following 147-residue polypeptide: Large ribosomal subunit protein uL11 (147 aa).

The protein belongs to the universal ribosomal protein uL11 family. In terms of assembly, part of the ribosomal stalk of the 50S ribosomal subunit. Interacts with L10 and the large rRNA to form the base of the stalk. L10 forms an elongated spine to which L12 dimers bind in a sequential fashion forming a multimeric L10(L12)X complex. One or more lysine residues are methylated.

Its function is as follows. Forms part of the ribosomal stalk which helps the ribosome interact with GTP-bound translation factors. The polypeptide is Large ribosomal subunit protein uL11 (Corynebacterium aurimucosum (strain ATCC 700975 / DSM 44827 / CIP 107346 / CN-1) (Corynebacterium nigricans)).